The chain runs to 333 residues: Ketol-acid reductoisomerase (NADP(+)) (333 aa).

One can recognise a KARI N-terminal Rossmann domain in the interval 6-186 (TRVYTECDAD…GALRAGAIQT (181 aa)). NADP(+) contacts are provided by residues 29 to 32 (YGSQ), Lys52, Ser55, Ser57, and 87 to 90 (DPAQ). The active site involves His112. Gly138 is a binding site for NADP(+). One can recognise a KARI C-terminal knotted domain in the interval 187–332 (TFTEETETDL…ARLRALFSWS (146 aa)). Asp195, Glu199, Glu231, and Glu235 together coordinate Mg(2+). Ser256 serves as a coordination point for substrate.

It belongs to the ketol-acid reductoisomerase family. Requires Mg(2+) as cofactor.

It carries out the reaction (2R)-2,3-dihydroxy-3-methylbutanoate + NADP(+) = (2S)-2-acetolactate + NADPH + H(+). It catalyses the reaction (2R,3R)-2,3-dihydroxy-3-methylpentanoate + NADP(+) = (S)-2-ethyl-2-hydroxy-3-oxobutanoate + NADPH + H(+). It functions in the pathway amino-acid biosynthesis; L-isoleucine biosynthesis; L-isoleucine from 2-oxobutanoate: step 2/4. Its pathway is amino-acid biosynthesis; L-valine biosynthesis; L-valine from pyruvate: step 2/4. In terms of biological role, involved in the biosynthesis of branched-chain amino acids (BCAA). Catalyzes an alkyl-migration followed by a ketol-acid reduction of (S)-2-acetolactate (S2AL) to yield (R)-2,3-dihydroxy-isovalerate. In the isomerase reaction, S2AL is rearranged via a Mg-dependent methyl migration to produce 3-hydroxy-3-methyl-2-ketobutyrate (HMKB). In the reductase reaction, this 2-ketoacid undergoes a metal-dependent reduction by NADPH to yield (R)-2,3-dihydroxy-isovalerate. The polypeptide is Ketol-acid reductoisomerase (NADP(+)) (Tropheryma whipplei (strain Twist) (Whipple's bacillus)).